The following is a 105-amino-acid chain: Large ribosomal subunit protein uL24 (105 aa).

Positions 1 to 25 are disordered; it reads MHIKKGDNVKVIAGKDKGKEGKVVS.

Belongs to the universal ribosomal protein uL24 family. As to quaternary structure, part of the 50S ribosomal subunit.

Its function is as follows. One of two assembly initiator proteins, it binds directly to the 5'-end of the 23S rRNA, where it nucleates assembly of the 50S subunit. One of the proteins that surrounds the polypeptide exit tunnel on the outside of the subunit. The chain is Large ribosomal subunit protein uL24 from Staphylococcus saprophyticus subsp. saprophyticus (strain ATCC 15305 / DSM 20229 / NCIMB 8711 / NCTC 7292 / S-41).